We begin with the raw amino-acid sequence, 283 residues long: MKVYIATPYGFCSGVKKSISLAEKILSLKGEVYTLGALVHNPKVIEELSKKGIKVLGKDEIVEGKALIVRAHGLPQRDIDFYKSLGNEIYDATCPLVKKVQVLAEYLKNNKYKVIIIGEKNHPEVIGILSYTDNQGIVIEYESDIEKVEYYPKIGIVFQTTQSFDNAIQKVNLIMNKGKEIRIFNTICPETIERQEKAKKLSKIVDVALVLGGKNSANTRRLYITLSLKVPTYHIENLEEIDKNWFKEDSKVGIITGTSTPNNFVEEVLALLKSLYPLEIHLV.

Cysteine 12 contributes to the [4Fe-4S] cluster binding site. (2E)-4-hydroxy-3-methylbut-2-enyl diphosphate is bound by residues histidine 40 and histidine 72. Dimethylallyl diphosphate-binding residues include histidine 40 and histidine 72. The isopentenyl diphosphate site is built by histidine 40 and histidine 72. Cysteine 94 provides a ligand contact to [4Fe-4S] cluster. Histidine 122 contributes to the (2E)-4-hydroxy-3-methylbut-2-enyl diphosphate binding site. Residue histidine 122 participates in dimethylallyl diphosphate binding. An isopentenyl diphosphate-binding site is contributed by histidine 122. Glutamate 124 (proton donor) is an active-site residue. Residue threonine 160 participates in (2E)-4-hydroxy-3-methylbut-2-enyl diphosphate binding. Cysteine 188 contributes to the [4Fe-4S] cluster binding site. 3 residues coordinate (2E)-4-hydroxy-3-methylbut-2-enyl diphosphate: serine 216, asparagine 218, and serine 259. Dimethylallyl diphosphate is bound by residues serine 216, asparagine 218, and serine 259. Residues serine 216, asparagine 218, and serine 259 each coordinate isopentenyl diphosphate.

This sequence belongs to the IspH family. The cofactor is [4Fe-4S] cluster.

The enzyme catalyses isopentenyl diphosphate + 2 oxidized [2Fe-2S]-[ferredoxin] + H2O = (2E)-4-hydroxy-3-methylbut-2-enyl diphosphate + 2 reduced [2Fe-2S]-[ferredoxin] + 2 H(+). It catalyses the reaction dimethylallyl diphosphate + 2 oxidized [2Fe-2S]-[ferredoxin] + H2O = (2E)-4-hydroxy-3-methylbut-2-enyl diphosphate + 2 reduced [2Fe-2S]-[ferredoxin] + 2 H(+). It participates in isoprenoid biosynthesis; dimethylallyl diphosphate biosynthesis; dimethylallyl diphosphate from (2E)-4-hydroxy-3-methylbutenyl diphosphate: step 1/1. Its pathway is isoprenoid biosynthesis; isopentenyl diphosphate biosynthesis via DXP pathway; isopentenyl diphosphate from 1-deoxy-D-xylulose 5-phosphate: step 6/6. Its function is as follows. Catalyzes the conversion of 1-hydroxy-2-methyl-2-(E)-butenyl 4-diphosphate (HMBPP) into a mixture of isopentenyl diphosphate (IPP) and dimethylallyl diphosphate (DMAPP). Acts in the terminal step of the DOXP/MEP pathway for isoprenoid precursor biosynthesis. In Dictyoglomus turgidum (strain DSM 6724 / Z-1310), this protein is 4-hydroxy-3-methylbut-2-enyl diphosphate reductase.